The sequence spans 384 residues: MPIAAAKPALLVLADGTPYPGWSFGADGTTVGEVVFNTGMTGYQEVMTDPSYCGQIVTFTYPELGNTGVNAEDEESIHPHVKGVVARNITRRPSNWRSTQSLPDYLVEHKIIGIYGIDTRALTRKLRSIGAMNGGISTEILEPEALLHHIQAAPSMAGLNLVKEVTTHEVYEWTDSTNDHWQFGPVAEQQGQPPLTVVALDFGVKRNILRRLASYGCRVIVVPASTSAAEILQYNPDGIFLSNGPGDPSAVEEGIVTTKELLAAKKPMFGICMGHQVLGLSLGAETFKLKFGHRGLNQPCGLEQQVEITSQNHGFAVTEGSLAEEVEITHFNLNDKTVAGLRHKELPFFSVQYHPEASPGPHDADYLFEKFVKLMRQQKAEVAG.

Positions 1–192 are CPSase; sequence MPIAAAKPAL…FGPVAEQQGQ (192 aa). Residues serine 51, glycine 244, and glycine 246 each contribute to the L-glutamine site. The 186-residue stretch at 196–381 folds into the Glutamine amidotransferase type-1 domain; the sequence is TVVALDFGVK…VKLMRQQKAE (186 aa). Cysteine 272 serves as the catalytic Nucleophile. Residues methionine 273, glutamine 276, asparagine 312, glycine 314, and phenylalanine 315 each contribute to the L-glutamine site. Active-site residues include histidine 354 and glutamate 356.

This sequence belongs to the CarA family. In terms of assembly, composed of two chains; the small (or glutamine) chain promotes the hydrolysis of glutamine to ammonia, which is used by the large (or ammonia) chain to synthesize carbamoyl phosphate. Tetramer of heterodimers (alpha,beta)4.

It catalyses the reaction hydrogencarbonate + L-glutamine + 2 ATP + H2O = carbamoyl phosphate + L-glutamate + 2 ADP + phosphate + 2 H(+). The catalysed reaction is L-glutamine + H2O = L-glutamate + NH4(+). The protein operates within amino-acid biosynthesis; L-arginine biosynthesis; carbamoyl phosphate from bicarbonate: step 1/1. It participates in pyrimidine metabolism; UMP biosynthesis via de novo pathway; (S)-dihydroorotate from bicarbonate: step 1/3. Small subunit of the glutamine-dependent carbamoyl phosphate synthetase (CPSase). CPSase catalyzes the formation of carbamoyl phosphate from the ammonia moiety of glutamine, carbonate, and phosphate donated by ATP, constituting the first step of 2 biosynthetic pathways, one leading to arginine and/or urea and the other to pyrimidine nucleotides. The small subunit (glutamine amidotransferase) binds and cleaves glutamine to supply the large subunit with the substrate ammonia. The polypeptide is Carbamoyl phosphate synthase small chain (Synechocystis sp. (strain ATCC 27184 / PCC 6803 / Kazusa)).